Consider the following 426-residue polypeptide: C4-dicarboxylate transport protein (426 aa).

8 helical membrane passes run 4-24, 44-64, 76-96, 142-162, 184-204, 222-242, 326-346, and 352-372; these read SIFT…ILLG, LIKM…IAGM, IALL…LVVV, IGAF…MFGF, VIFG…FGAM, LILC…GSIA, IWHQ…AAGV, and IVLA…LALI.

The protein belongs to the dicarboxylate/amino acid:cation symporter (DAACS) (TC 2.A.23) family.

The protein localises to the cell inner membrane. In terms of biological role, responsible for the transport of dicarboxylates such as succinate, fumarate, and malate from the periplasm across the membrane. The polypeptide is C4-dicarboxylate transport protein (Edwardsiella ictaluri (strain 93-146)).